The sequence spans 123 residues: Large ribosomal subunit protein uL29 (123 aa).

The protein belongs to the universal ribosomal protein uL29 family.

This Theileria parva (East coast fever infection agent) protein is Large ribosomal subunit protein uL29 (RPL35).